The chain runs to 655 residues: Chaperone protein dnaK1 (655 aa).

Phosphothreonine; by autocatalysis is present on threonine 197.

It belongs to the heat shock protein 70 family.

Functionally, acts as a chaperone. The sequence is that of Chaperone protein dnaK1 (dnaK1) from Synechococcus elongatus (strain ATCC 33912 / PCC 7942 / FACHB-805) (Anacystis nidulans R2).